Here is a 480-residue protein sequence, read N- to C-terminus: uncharacterized protein (480 aa).

Residue Lys222 is modified to N6-(pyridoxal phosphate)lysine.

Belongs to the Orn/Lys/Arg decarboxylase class-I family. The cofactor is pyridoxal 5'-phosphate.

This is an uncharacterized protein from Bacillus subtilis (strain 168).